The primary structure comprises 780 residues: Kojibiose phosphorylase (780 aa).

Substrate is bound at residue 354–355 (WD). The Proton donor role is filled by E496. 608 to 609 (KQ) is a binding site for substrate.

Belongs to the glycosyl hydrolase 65 family.

It catalyses the reaction kojibiose + phosphate = beta-D-glucose 1-phosphate + D-glucose. In terms of biological role, catalyzes the reversible phosphorolysis of kojibiose into beta-D-glucose 1-phosphate (Glc1P) and D-glucose. In the reverse direction, uses Glc1P as acceptor to produce alpha-1,2-glucans up to a degree of polymerization of 6. The protein is Kojibiose phosphorylase of Halothermothrix orenii (strain H 168 / OCM 544 / DSM 9562).